A 534-amino-acid polypeptide reads, in one-letter code: CTP synthase (534 aa).

Residues 1 to 269 (MHVSNSKFIF…DKIIIDAFRL (269 aa)) are amidoligase domain. Position 17 (serine 17) interacts with CTP. UTP is bound at residue serine 17. ATP is bound at residue 18 to 23 (SLGKGV). Position 58 (tyrosine 58) interacts with L-glutamine. Residue aspartate 75 participates in ATP binding. Aspartate 75 and glutamate 143 together coordinate Mg(2+). CTP is bound by residues 150–152 (DIE), 190–195 (KTKPTQ), and lysine 226. Residues 190 to 195 (KTKPTQ) and lysine 226 contribute to the UTP site. The 239-residue stretch at 294–532 (DIAIVGKYIK…IENAYIYKKE (239 aa)) folds into the Glutamine amidotransferase type-1 domain. An L-glutamine-binding site is contributed by glycine 352. The active-site Nucleophile; for glutamine hydrolysis is the cysteine 379. Residues 380–383 (LGMQ), glutamate 403, and arginine 460 contribute to the L-glutamine site. Active-site residues include histidine 505 and glutamate 507.

It belongs to the CTP synthase family. As to quaternary structure, homotetramer.

The enzyme catalyses UTP + L-glutamine + ATP + H2O = CTP + L-glutamate + ADP + phosphate + 2 H(+). The catalysed reaction is L-glutamine + H2O = L-glutamate + NH4(+). It catalyses the reaction UTP + NH4(+) + ATP = CTP + ADP + phosphate + 2 H(+). The protein operates within pyrimidine metabolism; CTP biosynthesis via de novo pathway; CTP from UDP: step 2/2. Its activity is regulated as follows. Allosterically activated by GTP, when glutamine is the substrate; GTP has no effect on the reaction when ammonia is the substrate. The allosteric effector GTP functions by stabilizing the protein conformation that binds the tetrahedral intermediate(s) formed during glutamine hydrolysis. Inhibited by the product CTP, via allosteric rather than competitive inhibition. Its function is as follows. Catalyzes the ATP-dependent amination of UTP to CTP with either L-glutamine or ammonia as the source of nitrogen. Regulates intracellular CTP levels through interactions with the four ribonucleotide triphosphates. In Hydrogenobaculum sp. (strain Y04AAS1), this protein is CTP synthase.